The primary structure comprises 348 residues: Phenylalanine--tRNA ligase alpha subunit (348 aa).

E262 contributes to the Mg(2+) binding site.

The protein belongs to the class-II aminoacyl-tRNA synthetase family. Phe-tRNA synthetase alpha subunit type 1 subfamily. In terms of assembly, tetramer of two alpha and two beta subunits. Mg(2+) serves as cofactor.

It localises to the cytoplasm. It catalyses the reaction tRNA(Phe) + L-phenylalanine + ATP = L-phenylalanyl-tRNA(Phe) + AMP + diphosphate + H(+). In Streptococcus pneumoniae serotype 2 (strain D39 / NCTC 7466), this protein is Phenylalanine--tRNA ligase alpha subunit.